Consider the following 61-residue polypeptide: MICHNQQSSQRPTIKTCPGETNCYKKRWRDHRGTIIERGCGCPSVKKGVGIYCCKTDKCNR.

Cystine bridges form between Cys-3/Cys-23, Cys-17/Cys-40, Cys-42/Cys-53, and Cys-54/Cys-59.

The protein belongs to the three-finger toxin family. Short-chain subfamily. Type I alpha-neurotoxin sub-subfamily. As to expression, expressed by the venom gland.

It localises to the secreted. Binds to muscle nicotinic acetylcholine receptor (nAChR) and inhibit acetylcholine from binding to the receptor, thereby impairing neuromuscular transmission. The chain is Short neurotoxin 2 from Naja nivea (Cape cobra).